Reading from the N-terminus, the 312-residue chain is uncharacterized protein (312 aa).

Positions 8 to 65 (PGLTCFEIFLAIAEAGSLGGAARELGLTQQAVSRRLASMEAQIGVRLAIRTTRGSQLT) constitute an HTH lysR-type domain. Residues 25–45 (LGGAARELGLTQQAVSRRLAS) constitute a DNA-binding region (H-T-H motif).

It belongs to the LysR transcriptional regulatory family.

This is an uncharacterized protein from Mycobacterium tuberculosis (strain CDC 1551 / Oshkosh).